The chain runs to 2635 residues: Large tegument protein deneddylase (2635 aa).

The deubiquitination activity stretch occupies residues 1–233 (MAAQPLYMEG…LHGPRMDISR (233 aa)). The Peptidase C76 domain maps to 9-223 (EGMASTHQAN…NHYRTIVFEE (215 aa)). Active-site residues include C29, D159, and H161. Disordered stretches follow at residues 243–497 (ITSP…DRYA), 2238–2269 (PLTITPNKPTGTPHVSPEADPITERKRGQQPK), 2357–2438 (RTAL…KRAA), and 2500–2533 (KAGWDTAPDIPLPHSSPESSPPTSPQPIRVDDKS). Residues 245–255 (SPSVSPAPSEA) show a composition bias toward low complexity. 2 stretches are compositionally biased toward basic and acidic residues: residues 256 to 270 (PLRRDSTQSQDETRP) and 282 to 295 (PTDRPRPPHQDRPP). The interaction with inner tegument protein stretch occupies residues 316–325 (KTGRGGNEGR). The span at 330–346 (PPDEHQPPHITAEHMDQ) shows a compositional bias: basic and acidic residues. The segment covering 448–461 (DDPLTPLYPLTDTP) has biased composition (low complexity). Over residues 2379–2402 (TLTFRLPPTAPTPATAALETKTTP) the composition is skewed to low complexity. Over residues 2425–2437 (HARDTSPPAEKRA) the composition is skewed to basic and acidic residues.

Belongs to the herpesviridae large tegument protein family. In terms of assembly, interacts with host CUL1 and CUL4A; these interactions inhibit the E3 ligase activity of cullins. Interacts with inner tegument protein. Interacts with capsid vertex specific component CVC2. Interacts with the major capsid protein/MCP.

It is found in the virion tegument. Its subcellular location is the host cytoplasm. The protein resides in the host nucleus. It catalyses the reaction Thiol-dependent hydrolysis of ester, thioester, amide, peptide and isopeptide bonds formed by the C-terminal Gly of ubiquitin (a 76-residue protein attached to proteins as an intracellular targeting signal).. In terms of biological role, large tegument protein that plays multiple roles in the viral cycle. During viral entry, remains associated with the capsid while most of the tegument is detached and participates in the capsid transport toward the host nucleus. Plays a role in the routing of the capsid at the nuclear pore complex and subsequent uncoating. Within the host nucleus, acts as a deneddylase and promotes the degradation of nuclear CRLs (cullin-RING ubiquitin ligases) and thereby stabilizes nuclear CRL substrates, while cytoplasmic CRLs remain unaffected. These modifications prevent host cell cycle S-phase progression and create a favorable environment allowing efficient viral genome replication. Participates later in the secondary envelopment of capsids. Indeed, plays a linker role for the association of the outer viral tegument to the capsids together with the inner tegument protein. The protein is Large tegument protein deneddylase of Homo sapiens (Human).